The sequence spans 816 residues: MGTNRPRPRTKDFFAAPALSLTLAGVFGRKNGPAASGGDGVEEGDEEVQAAGEAAVEISSENAGPGCRQSQSGGGSGEDGGHDDDDGEGSNKKRRRKNYHRHTAEQIRIMEALFKESPHPDERQRQQVSKQLGLSARQVKFWFQNRRTQIKAVQERHENSLLKSELEKLQDEHRAMRELAKKPSRCLNCGVVATSSDAAAAATAADTREQRLRLEKAKLKAEVCMPPPRSRARPFRCATLQDTDSGELAMLNLFQIERLRGTPGKSAADGIASPPCSASAGAMQTNSRSPPLHDHDGGFLRHDDDKPRILELATRALDELVGMCSSGEPVWVRGVETGRDILNYDEYVRLFRRDHGGSGDQMAGWTVEASRECGLVYLDTMHLVHTFMDVDKWKDLFPTMISKAATLEMISNREDDGRDGVLQLMYAELQTLTPMVPTRELYFARYCKKLAAERWAIVDVSFDESETGVHASSAVRCWKNPSGCLIEEQNNGRCKMTWVEHTRCRRCTVAPLYRAVTASGVAFGARRWVAALQLQCERMVFAVATNVPTRDSTGVSTLAGRRSVLKLAHRMTSSLCRTTGGSCDMAWRRAPKGGSGGGGDDDIWLTSRENAGDDPGEPQGLIACAAASTWLPVNPTALLDLLRDESRRPEWDVMLPGKSVQSRVNLAKGKDRTNCVTAYAARPEEEEERGGKWVLQDVCTNPCESTIAYAAIDAAALQPVIAGHDSSGVHLLPCGFISVMPDGLESKPAVITASRRGGEASGAGSLVTVAFQVPASPSAAAATLSPDSVEAVTVLVSSTLRNIRKALGCDSCEEEF.

Residues 26 to 104 (VFGRKNGPAA…RRKNYHRHTA (79 aa)) are disordered. Residues 92-101 (KKRRRKNYHR) show a composition bias toward basic residues. A DNA-binding region (homeobox) is located at residues 95–154 (RRKNYHRHTAEQIRIMEALFKESPHPDERQRQQVSKQLGLSARQVKFWFQNRRTQIKAVQ). A coiled-coil region spans residues 149–182 (QIKAVQERHENSLLKSELEKLQDEHRAMRELAKK). Residues 265–296 (KSAADGIASPPCSASAGAMQTNSRSPPLHDHD) are disordered. The START domain maps to 302-541 (HDDDKPRILE…LQLQCERMVF (240 aa)).

It belongs to the HD-ZIP homeobox family. Class IV subfamily.

Its subcellular location is the nucleus. Probable transcription factor. The polypeptide is Homeobox-leucine zipper protein ROC9 (ROC9) (Oryza sativa subsp. japonica (Rice)).